A 231-amino-acid chain; its full sequence is Large ribosomal subunit protein uL1 (231 aa).

It belongs to the universal ribosomal protein uL1 family. Part of the 50S ribosomal subunit.

Binds directly to 23S rRNA. The L1 stalk is quite mobile in the ribosome, and is involved in E site tRNA release. Functionally, protein L1 is also a translational repressor protein, it controls the translation of the L11 operon by binding to its mRNA. This chain is Large ribosomal subunit protein uL1, found in Neisseria meningitidis serogroup C (strain 053442).